The chain runs to 657 residues: MRGCLQSVKWLTSALRPSQSLASSTRYPRRLLSTSAPRNAQVRKPASEVEQRIAAIPIERFRNFCIVAHVDHGKSTLSDRLLELTGTIEAGANKQVLDKLDVERERGITVKAQTCSMLYNHQGEDYLLHLVDTPGHVDFRAEVSRSYASCGGALLLVDASQGIQAQTVANFYLAFAEGLKLVPVINKVDLPSADPQRALDQMKNTFELDPESAVLVSAKTGLNVSQLLPTVIEQIPAPVGDRTKPLRMLLVDSWYSTYKGVILLVRLFDGEIRAGDQVVSFATGLKYTVGEVGIMYPGQTAQSVLRAGQVGYIYFNPAMKRSQEAKVGDTYTKVGSERLVQPLPGFEEPKAMVFVAAYPVDASDFPHLEDSINQLILNDRSVTLQKESSEALGAGFRLGFLGTLHCSVFEDRLRQEHGASIIITPPTVPFKVIWKDGKEEIITNPALFPEEDTLRAKVTELQEPFVLATLTFPEEYLGRVIELCESNRGEQKSLEFFTSTQVILKYELPLAQLVDDFFGKLKGSTKGYASLDYEESGWRRSNISKLQLLVNKVPVDAVSRVVHSSQVQRLGRLWVSKFKEHVDRQMFEVVIQAAAGRNVVARESIKPFRKDVLQKLHAADVTRRKKLLEKQKEGRKKLKAVGNVVIEHKAFQAFLAK.

The N-terminal 39 residues, 1–39 (MRGCLQSVKWLTSALRPSQSLASSTRYPRRLLSTSAPRN), are a transit peptide targeting the mitochondrion. Residues 59–239 (ERFRNFCIVA…TVIEQIPAPV (181 aa)) form the tr-type G domain. Residues 68–75 (AHVDHGKS), 132–136 (DTPGH), and 186–189 (NKVD) each bind GTP.

Belongs to the TRAFAC class translation factor GTPase superfamily. Classic translation factor GTPase family. LepA subfamily.

The protein localises to the mitochondrion inner membrane. It catalyses the reaction GTP + H2O = GDP + phosphate + H(+). Promotes mitochondrial protein synthesis. May act as a fidelity factor of the translation reaction, by catalyzing a one-codon backward translocation of tRNAs on improperly translocated ribosomes. Binds to mitochondrial ribosomes in a GTP-dependent manner. This Ajellomyces capsulatus (strain G186AR / H82 / ATCC MYA-2454 / RMSCC 2432) (Darling's disease fungus) protein is Translation factor GUF1, mitochondrial.